A 553-amino-acid polypeptide reads, in one-letter code: Urocanate hydratase (553 aa).

NAD(+)-binding positions include Gly45–Gly46, Gln123, Gly169–Gly171, Asp189, Arg194, Asn235–Ala236, Gln256–His260, Tyr266–Val267, Tyr315, and Gly485.

Belongs to the urocanase family. NAD(+) serves as cofactor.

Its subcellular location is the cytoplasm. It catalyses the reaction 4-imidazolone-5-propanoate = trans-urocanate + H2O. It functions in the pathway amino-acid degradation; L-histidine degradation into L-glutamate; N-formimidoyl-L-glutamate from L-histidine: step 2/3. Its function is as follows. Catalyzes the conversion of urocanate to 4-imidazolone-5-propionate. The protein is Urocanate hydratase of Staphylococcus aureus (strain COL).